Reading from the N-terminus, the 184-residue chain is ATP synthase subunit b, chloroplastic (184 aa).

Residues 27-49 (LATNLINLSVVLGVLIFFGKGVL) traverse the membrane as a helical segment.

This sequence belongs to the ATPase B chain family. F-type ATPases have 2 components, F(1) - the catalytic core - and F(0) - the membrane proton channel. F(1) has five subunits: alpha(3), beta(3), gamma(1), delta(1), epsilon(1). F(0) has four main subunits: a(1), b(1), b'(1) and c(10-14). The alpha and beta chains form an alternating ring which encloses part of the gamma chain. F(1) is attached to F(0) by a central stalk formed by the gamma and epsilon chains, while a peripheral stalk is formed by the delta, b and b' chains.

Its subcellular location is the plastid. The protein resides in the chloroplast thylakoid membrane. In terms of biological role, f(1)F(0) ATP synthase produces ATP from ADP in the presence of a proton or sodium gradient. F-type ATPases consist of two structural domains, F(1) containing the extramembraneous catalytic core and F(0) containing the membrane proton channel, linked together by a central stalk and a peripheral stalk. During catalysis, ATP synthesis in the catalytic domain of F(1) is coupled via a rotary mechanism of the central stalk subunits to proton translocation. Its function is as follows. Component of the F(0) channel, it forms part of the peripheral stalk, linking F(1) to F(0). This chain is ATP synthase subunit b, chloroplastic, found in Nymphaea alba (White water-lily).